We begin with the raw amino-acid sequence, 308 residues long: tRNA dimethylallyltransferase (308 aa).

10–17 (GPTASGKT) lines the ATP pocket. Residue 12–17 (TASGKT) participates in substrate binding. Interaction with substrate tRNA regions lie at residues 35–38 (DSSL) and 159–163 (QRIFR).

Belongs to the IPP transferase family. In terms of assembly, monomer. Requires Mg(2+) as cofactor.

It carries out the reaction adenosine(37) in tRNA + dimethylallyl diphosphate = N(6)-dimethylallyladenosine(37) in tRNA + diphosphate. Functionally, catalyzes the transfer of a dimethylallyl group onto the adenine at position 37 in tRNAs that read codons beginning with uridine, leading to the formation of N6-(dimethylallyl)adenosine (i(6)A). The protein is tRNA dimethylallyltransferase of Francisella philomiragia subsp. philomiragia (strain ATCC 25017 / CCUG 19701 / FSC 153 / O#319-036).